The following is a 79-amino-acid chain: Putative defensin-like protein 274 (79 aa).

A signal peptide spans 1–23; sequence MASSRFQLVALLVVFSLVISITA. 4 cysteine pairs are disulfide-bonded: cysteine 35/cysteine 76, cysteine 41/cysteine 64, cysteine 47/cysteine 74, and cysteine 51/cysteine 75.

The protein belongs to the DEFL family.

Its subcellular location is the secreted. This Arabidopsis thaliana (Mouse-ear cress) protein is Putative defensin-like protein 274.